Here is a 273-residue protein sequence, read N- to C-terminus: 4-hydroxy-tetrahydrodipicolinate reductase (273 aa).

Residues 10–15 (GAGGRM), Glu-36, 100–102 (GTT), and 124–127 (SGNM) contribute to the NAD(+) site. Catalysis depends on His-157, which acts as the Proton donor/acceptor. His-158 is a binding site for (S)-2,3,4,5-tetrahydrodipicolinate. The active-site Proton donor is Lys-161. 167 to 168 (GT) lines the (S)-2,3,4,5-tetrahydrodipicolinate pocket.

This sequence belongs to the DapB family.

The protein resides in the cytoplasm. The enzyme catalyses (S)-2,3,4,5-tetrahydrodipicolinate + NAD(+) + H2O = (2S,4S)-4-hydroxy-2,3,4,5-tetrahydrodipicolinate + NADH + H(+). It carries out the reaction (S)-2,3,4,5-tetrahydrodipicolinate + NADP(+) + H2O = (2S,4S)-4-hydroxy-2,3,4,5-tetrahydrodipicolinate + NADPH + H(+). It participates in amino-acid biosynthesis; L-lysine biosynthesis via DAP pathway; (S)-tetrahydrodipicolinate from L-aspartate: step 4/4. Functionally, catalyzes the conversion of 4-hydroxy-tetrahydrodipicolinate (HTPA) to tetrahydrodipicolinate. In Rhodopseudomonas palustris (strain BisA53), this protein is 4-hydroxy-tetrahydrodipicolinate reductase.